Here is a 30-residue protein sequence, read N- to C-terminus: Cycloviolacin-O18 (30 aa).

A cross-link (cyclopeptide (Gly-Asn)) is located at residues 1-30 (GIPCGESCVYIPCTVTALAGCKCKSKVCYN). Disulfide bonds link cysteine 4–cysteine 21, cysteine 8–cysteine 23, and cysteine 13–cysteine 28.

In terms of processing, this is a cyclic peptide. In terms of tissue distribution, expressed in leaves, petals and petioles but not in roots and runners (at protein level).

In terms of biological role, probably participates in a plant defense mechanism. This is Cycloviolacin-O18 from Viola odorata (Sweet violet).